Reading from the N-terminus, the 456-residue chain is UDP-N-acetylmuramate--L-alanine ligase (456 aa).

117–123 (GTHGKTT) provides a ligand contact to ATP.

The protein belongs to the MurCDEF family.

Its subcellular location is the cytoplasm. The catalysed reaction is UDP-N-acetyl-alpha-D-muramate + L-alanine + ATP = UDP-N-acetyl-alpha-D-muramoyl-L-alanine + ADP + phosphate + H(+). It participates in cell wall biogenesis; peptidoglycan biosynthesis. Cell wall formation. In Clostridium tetani (strain Massachusetts / E88), this protein is UDP-N-acetylmuramate--L-alanine ligase.